The following is a 397-amino-acid chain: Acetate kinase 1 (397 aa).

Asn-8 is a Mg(2+) binding site. An ATP-binding site is contributed by Lys-15. Arg-89 is a binding site for substrate. Asp-146 functions as the Proton donor/acceptor in the catalytic mechanism. ATP is bound by residues 206–210, 281–283, and 329–333; these read HLGNG, DLR, and GIGEN. Glu-382 contributes to the Mg(2+) binding site.

It belongs to the acetokinase family. Homodimer. Requires Mg(2+) as cofactor. Mn(2+) is required as a cofactor.

The protein localises to the cytoplasm. It carries out the reaction acetate + ATP = acetyl phosphate + ADP. The protein operates within metabolic intermediate biosynthesis; acetyl-CoA biosynthesis; acetyl-CoA from acetate: step 1/2. Its function is as follows. Catalyzes the formation of acetyl phosphate from acetate and ATP. Can also catalyze the reverse reaction. This chain is Acetate kinase 1, found in Listeria monocytogenes serovar 1/2a (strain ATCC BAA-679 / EGD-e).